Here is a 719-residue protein sequence, read N- to C-terminus: DNA topoisomerase 1 (719 aa).

Residues 6–137 (SKILVIESPN…NVNKCKRIIF (132 aa)) enclose the Toprim domain. E12 and D106 together coordinate Mg(2+). The Topo IA-type catalytic domain occupies 156–601 (QKDWVSSQIT…AFWNDFSEVL (446 aa)). An interaction with DNA region spans residues 189–194 (SAGRVQ). Y334 functions as the O-(5'-phospho-DNA)-tyrosine intermediate in the catalytic mechanism. C4-type zinc fingers lie at residues 620 to 646 (CPNC…FPKC) and 667 to 699 (CELC…FPKC).

Belongs to the type IA topoisomerase family. In terms of assembly, monomer. Mg(2+) serves as cofactor.

It carries out the reaction ATP-independent breakage of single-stranded DNA, followed by passage and rejoining.. Releases the supercoiling and torsional tension of DNA, which is introduced during the DNA replication and transcription, by transiently cleaving and rejoining one strand of the DNA duplex. Introduces a single-strand break via transesterification at a target site in duplex DNA. The scissile phosphodiester is attacked by the catalytic tyrosine of the enzyme, resulting in the formation of a DNA-(5'-phosphotyrosyl)-enzyme intermediate and the expulsion of a 3'-OH DNA strand. The free DNA strand then undergoes passage around the unbroken strand, thus removing DNA supercoils. Finally, in the religation step, the DNA 3'-OH attacks the covalent intermediate to expel the active-site tyrosine and restore the DNA phosphodiester backbone. The chain is DNA topoisomerase 1 from Mycoplasmoides gallisepticum (strain R(low / passage 15 / clone 2)) (Mycoplasma gallisepticum).